A 355-amino-acid polypeptide reads, in one-letter code: D-alanine--D-alanine ligase (355 aa).

Positions 143–350 (KQIFSNLSIP…IDQLVAKLID (208 aa)) constitute an ATP-grasp domain. 178–233 (IEKLNLPVFVKPANSGSSLGISKAKNKSEIIKALQKAWEIDSRIVIEEGLNVRELE) is a binding site for ATP. 3 residues coordinate Mg(2+): D303, E317, and N319.

This sequence belongs to the D-alanine--D-alanine ligase family. It depends on Mg(2+) as a cofactor. Mn(2+) serves as cofactor.

The protein resides in the cytoplasm. The catalysed reaction is 2 D-alanine + ATP = D-alanyl-D-alanine + ADP + phosphate + H(+). It participates in cell wall biogenesis; peptidoglycan biosynthesis. In terms of biological role, cell wall formation. This is D-alanine--D-alanine ligase from Prochlorococcus marinus (strain MIT 9515).